Here is a 193-residue protein sequence, read N- to C-terminus: Cuticle protein 18.7 (193 aa).

Functionally, component of the cuticle of migratory locust which contains more than 100 different structural proteins. This Locusta migratoria (Migratory locust) protein is Cuticle protein 18.7.